Here is a 555-residue protein sequence, read N- to C-terminus: MSTETELQVAVKTSAKKDSRKKGQDRSEATLIKRFKGEGVRYKAKLIGIDEVSAARGDKLCQDSMMKLKGVVAGARSKGEHKQKIFLTISFGGIKIFDEKTGALQHHHAVHEISYIAKDITDHRAFGYVCGKEGNHRFVAIKTAQAAEPVILDLRDLFQLIYELKQREELEKKAQKDKQCEQAVYQTILEEDVEDPVYQYIVFEAGHEPIRDPETEENIYQVPTSQKKEGVYDVPKSQPVSAVTQLELFGDMSTPPDITSPPTPATPGDAFLPAPSQTLPGSADVFGSMSFGTAAVPSGYVAMGAVLPSFWGQQPLVQQQIAMGAQPPVAQVIPGAQPIAWGQPGLFPATQQPWPTVAGQFPPAAFMPTQTVMPLPAAMFQGPLTPLATVPGTNDSARSSPQSDKPRQKMGKEMFKDFQMAQPPPVPSRKPDQPSLTCTSEAFSSYFNKVGVAQDTDDCDDFDISQLNLTPVTSTTPSTNSPPTPAPRQSSPSKSSASHVSDPTADDIFEEGFESPSKSEEQEAPDGSQASSTSDPFGEPSGEPSGDNISPQDGS.

Positions 1–26 are disordered; that stretch reads MSTETELQVAVKTSAKKDSRKKGQDR. Basic and acidic residues predominate over residues 15-26; that stretch reads AKKDSRKKGQDR. The PID domain maps to 36 to 189; sequence KGEGVRYKAK…CEQAVYQTIL (154 aa). 3 positions are modified to phosphotyrosine: Tyr-198, Tyr-220, and Tyr-232. 2 disordered regions span residues 386–409 and 469–555; these read PLAT…PRQK and LTPV…QDGS. The segment covering 391 to 403 has biased composition (polar residues); sequence PGTNDSARSSPQS. Composition is skewed to low complexity over residues 470 to 479 and 490 to 501; these read TPVTSTTPST and SSPSKSSASHVS. Ser-491 carries the post-translational modification Phosphoserine; by CDK5. Residues 504-513 are compositionally biased toward acidic residues; it reads TADDIFEEGF.

In terms of assembly, associates with the SH2 domains of SRC, FYN and ABL. Interacts (phosphorylated on tyrosine residues) with CRK and CRKL (via respective SH2 domain). Interacts with SIAH1, LRP8 and VLDLR. Interacts with LRP1. Interacts with APLP1 (via NPXY motif). Interacts with DAB2IP. Interacts with ZSWIM8. Post-translationally, phosphorylated by FYN on Tyr-198 and Tyr-220 upon reelin induction in embryonic neurons. Also phosphorylated on Ser-491 independently of reelin signaling. Ubiquitinated by various cullin-5-RING E3 ubiquitin-protein ligase complexes (ECS complexes) following ligand-binding and phosphorylation, leading to its degradation. Ubiquitinated by the ECS(SOCS7) complex in the cortical plate of the developing cerebral cortex following ligand-binding and phosphorylation by FYN, leading to its degradation by the proteasome. Recognized by ZSWIM8 through a disorder targets misorder mechanism that eliminates misfolded DAB1 via ubiquitination and proteasomal degradation.

It is found in the cytoplasm. Signaling adapter of the reelin-mediated signaling pathway, which regulates the migration and differentiation of postmitotic neurons during brain development. Mediates intracellular transduction of Reelin signaling following reelin (RELN)-binding to its receptor: acts by docking proteins through its phosphotyrosine residues and PID domain. The sequence is that of Disabled homolog 1 (Dab1) from Rattus norvegicus (Rat).